Reading from the N-terminus, the 470-residue chain is Argininosuccinate lyase (470 aa).

This sequence belongs to the lyase 1 family. Argininosuccinate lyase subfamily.

It localises to the cytoplasm. The catalysed reaction is 2-(N(omega)-L-arginino)succinate = fumarate + L-arginine. The protein operates within amino-acid biosynthesis; L-arginine biosynthesis; L-arginine from L-ornithine and carbamoyl phosphate: step 3/3. This is Argininosuccinate lyase from Bordetella avium (strain 197N).